We begin with the raw amino-acid sequence, 392 residues long: DNA-directed RNA polymerase subunit Rpo1C (392 aa).

Belongs to the RNA polymerase beta' chain family. Part of the RNA polymerase complex.

It is found in the cytoplasm. It carries out the reaction RNA(n) + a ribonucleoside 5'-triphosphate = RNA(n+1) + diphosphate. Its function is as follows. DNA-dependent RNA polymerase (RNAP) catalyzes the transcription of DNA into RNA using the four ribonucleoside triphosphates as substrates. Forms part of the jaw domain. This is DNA-directed RNA polymerase subunit Rpo1C from Sulfurisphaera tokodaii (strain DSM 16993 / JCM 10545 / NBRC 100140 / 7) (Sulfolobus tokodaii).